Consider the following 185-residue polypeptide: MDLSSLRPAAGAVKNKKRVGRGQGSGNGTTAGKGNKGQQARSGYQKPINEGGQVPVYRRLPKFGFTSLQRKPIKTLNLSQLEDWIQDGLITGEEISVYDLKALCSGSYADYFKILGNGEITTAIKITAHFFSKSAEEKIIKAGGQVIKAYRTLEEASKIRDLSVEEALLKPKAKLVKRVKKSAKP.

The disordered stretch occupies residues 1–51 (MDLSSLRPAAGAVKNKKRVGRGQGSGNGTTAGKGNKGQQARSGYQKPINEG). Over residues 21 to 35 (RGQGSGNGTTAGKGN) the composition is skewed to gly residues.

The protein belongs to the universal ribosomal protein uL15 family. As to quaternary structure, part of the 50S ribosomal subunit.

Functionally, binds to the 23S rRNA. The chain is Large ribosomal subunit protein uL15 from Chlorobium phaeobacteroides (strain DSM 266 / SMG 266 / 2430).